We begin with the raw amino-acid sequence, 531 residues long: Cytochrome P450 monooxygenase peniB (531 aa).

A helical transmembrane segment spans residues 30-48; sequence ILSIAAVVFLGYLLLRPLF. Position 445 (Cys-445) interacts with heme.

Belongs to the cytochrome P450 family. Heme serves as cofactor.

The protein localises to the membrane. It carries out the reaction silphinene-15-oate + 2 reduced [NADPH--hemoprotein reductase] + 2 O2 = gamma-lactone-2-keto[5.5.5.5]fenestrane + 2 oxidized [NADPH--hemoprotein reductase] + 3 H2O + H(+). The protein operates within secondary metabolite biosynthesis; terpenoid biosynthesis. In terms of biological role, cytochrome P450 monooxygenase; part of the gene cluster that mediates the biosynthesis of penifulvin A, a potent insecticidal sesquiterpene that features a [5.5.5.6]dioxafenestrane ring. Within the pathway, peniB catalyzes the multi-step oxidation of silphinene to synthesize gamma-lactone-2-keto[5.5.5.5]fenestrane, including oxidation of the C15 methylgroup in silphinene to form silphinene-15-oic acid, activationof the C1-C2 double bond to form the gamma-lactone-2-hydroxy[5.5.5.5]fenestrane, and dehydrogenation of the hydroxy group at C2 of gamma-lactone-2-hydroxy[5.5.5.5]fenestrane to generate gamma-lactone-2-keto[5.5.5.5]fenestrane. The first step of the pathway is performed by the sesquiterpene cyclase peniA that generates the angular triquinane scaffold silphinene via cyclization of the linear farnesyl pyrophosphate (FPP). The cytochrome P450 monooxygenase peniB and the flavin-dependent monooxygenase peniC then catalyze a series of oxidation reactions to transform silphinene into penifulvin A. In Penicillium patulum (Penicillium griseofulvum), this protein is Cytochrome P450 monooxygenase peniB.